Here is a 138-residue protein sequence, read N- to C-terminus: Acidic phospholipase A2 (138 aa).

The signal sequence occupies residues M1–G16. Cystine bridges form between C42/C131, C44/C60, C59/C111, C65/C138, C66/C104, C73/C97, and C91/C102. Residues Y43, G45, and G47 each contribute to the Ca(2+) site. Residue H63 is part of the active site. D64 is a Ca(2+) binding site. D105 is an active-site residue.

The protein belongs to the phospholipase A2 family. Group II subfamily. D49 sub-subfamily. In terms of assembly, homodimer. It depends on Ca(2+) as a cofactor. As to expression, expressed by the venom gland.

Its subcellular location is the secreted. The catalysed reaction is a 1,2-diacyl-sn-glycero-3-phosphocholine + H2O = a 1-acyl-sn-glycero-3-phosphocholine + a fatty acid + H(+). Functionally, PLA2 catalyzes the calcium-dependent hydrolysis of the 2-acyl groups in 3-sn-phosphoglycerides. This is Acidic phospholipase A2 from Crotalus atrox (Western diamondback rattlesnake).